The sequence spans 1091 residues: MKLLYTDIRTSLTEILTREAEELVAAGKRVFYIAPNSLSFEKERAVLECLSQQASFSITVTRFAQMARYLVLNDLPAKTILDDIGLGLAFYKCLAELNPKDLRVYGAIKQDPQLIQQLIELYHEMTKSQMNFLDLENLTDEDKRADLLLIFEKVTAYLNQGQLAQGSQLSHLIEAIENDKVSSDFNQIALVIDGFTRFSAEEERVVDLLHGKGVEIVIGAYASKKAYTSPFSEGNLYQASVKFLHHLASKYQTPAQDCSQTHEKMDSFDKASRLLESSYDFSELALDVDEKDRENLQIWSCLTQKEELELVARSIRQKLHENSDLSYKHFRILLGDVASYQLSLKTIFDQYQIPFYLGRSEAMAHHPLTQFVESILALKRYRFRQEDLINLLRTDLYTDLSQSDIDAFEQYIRYLGINGLPAFQQTFTKSHHGKFNLERLNVLRLRILAPLETLFASRKQKAENLLQKWSVFLKEGAVTKQLQDLTTTLEAVEQERQAEVWKAFCHVLEQFATVFAGSQVSLEDFLALLHSGMSLSQYRTIPATVDTVLVQSYDLIAPLTADFVYAIGLTQDNLPKISQNTSLLTDEERQNLNQATEEGVQLLIASSENLKKNRYTMLSLVNSARKQLFLSAPSLFNESESKESAYLQELIHFGFRRREKRMNHKGLSKEDMGSYHSLLSSLVAYHQQGEMSDTEQDLTFVKVLSRVIGKKLDQQGLENPAIPTSPSSKTLAKDTLQALYPAKQEFYLSTSGLTEFYRNEYSYFLRYVLGLQEELRLHPDARSHGNFLHRIFERALQLPNEDSFDQRLEQAIQETSQEREFEAIYQESLEAQFTKEVLLDVARTTGHILRHNPAIETIKEEANFGGKDQAFIQLDNGRSVFVRGKVDRIDRLKANGAIGVVDYKSSLTQFQFPHFFNGLNSQLPTYLAALKREGEQNFFGAMYLEMAEPVQSLMAVKSLAGAVVEASKSMKYQGLFLEKESSYLGEFYNKNKANQLTDEEFQLLLDYNAYLYKKAAEKILAGRFAINPYTENGRSIAPYVQQHQAITGFEANYHLGQARFLEKLDLADGKRLVGEKLKQAWLEKIREELNR.

This sequence belongs to the helicase family. AddB/RexB type 2 subfamily. In terms of assembly, heterodimer of AddA and RexB. Requires Mg(2+) as cofactor.

The heterodimer acts as both an ATP-dependent DNA helicase and an ATP-dependent, dual-direction single-stranded exonuclease. Recognizes the chi site generating a DNA molecule suitable for the initiation of homologous recombination. This subunit has 5' -&gt; 3' nuclease activity but not helicase activity. In Streptococcus pneumoniae (strain CGSP14), this protein is ATP-dependent helicase/deoxyribonuclease subunit B.